A 189-amino-acid chain; its full sequence is MSTVAWDFAERRLGLNLDILYPNGTAYNFRVIQDYTTGTQFTIFERYRFCAKQKAPMPEPENCIPGNTSVRFRGFLGAGKDRIDYDLYTMKLTKEETGNLEGEGTFSVVRGTEYDIPLSNSFIGTYFDGETPYAQVSNGGYYNIEIGIDDPKRWFDVPDYCPKELTDLTMIPKHIPKWTWIRLPAPRLF.

Endoderm cells.

The polypeptide is Development-specific protein LVN1.2 (Lytechinus variegatus (Green sea urchin)).